A 130-amino-acid polypeptide reads, in one-letter code: Small ribosomal subunit protein uS11c (130 aa).

The protein belongs to the universal ribosomal protein uS11 family. In terms of assembly, part of the 30S ribosomal subunit.

The protein localises to the plastid. It localises to the chloroplast. The polypeptide is Small ribosomal subunit protein uS11c (Mesostigma viride (Green alga)).